The sequence spans 1571 residues: Phosphatidylinositol 3-kinase 1 (1571 aa).

Over residues 1–73 the composition is skewed to low complexity; sequence MNSIESSSND…NNDNNNNNNN (73 aa). Disordered stretches follow at residues 1–119, 157–195, and 283–430; these read MNSI…HVNN, GYDV…RTRN, and NSKL…IIKR. A compositionally biased stretch (basic and acidic residues) spans 74–85; it reads IDKKRKDSKNKQ. The span at 101 to 119 shows a compositional bias: low complexity; that stretch reads NSNDSNCSSGSSSGGHVNN. A compositionally biased stretch (basic and acidic residues) spans 283–292; it reads NSKLDTEEKP. Low complexity predominate over residues 294 to 324; that stretch reads TTTTTTTTTSTSISTSTPTTTTTTTTNTSTT. Residues 325–337 are compositionally biased toward polar residues; sequence NDITIKPKTSPTK. Low complexity-rich tracts occupy residues 360–382 and 405–424; these read KVST…PTGK and NNTN…NNNN. The PI3K-ABD domain maps to 530–627; it reads IKTSFNILFL…IPKLKVIEKS (98 aa). The 90-residue stretch at 700–789 folds into the PI3K-RBD domain; sequence GNKILISIFL…GTKPQLTLIQ (90 aa). The C2 PI3K-type domain maps to 851–1020; sequence IKKPFRVKVM…GLTLEFEEFN (170 aa). Residues 1040 to 1216 enclose the PIK helical domain; that stretch reads QPPTNINSNE…GILLESYLYA (177 aa). The 279-residue stretch at 1280 to 1558 folds into the PI3K/PI4K catalytic domain; it reads IINKSKYMDS…LIHESLATKT (279 aa). The interval 1286 to 1292 is G-loop; it reads YMDSKKL. Positions 1424 to 1432 are catalytic loop; sequence GIGDRHNDN. The tract at residues 1443–1469 is activation loop; it reads HIDFGHFLGNYKKKFGFKRERAPFVFT.

Belongs to the PI3/PI4-kinase family.

The catalysed reaction is a 1,2-diacyl-sn-glycero-3-phospho-(1D-myo-inositol) + ATP = a 1,2-diacyl-sn-glycero-3-phospho-(1D-myo-inositol-3-phosphate) + ADP + H(+). The protein is Phosphatidylinositol 3-kinase 1 (pikA) of Dictyostelium discoideum (Social amoeba).